The following is a 132-amino-acid chain: Small ribosomal subunit protein uS8 (132 aa).

The protein belongs to the universal ribosomal protein uS8 family. Part of the 30S ribosomal subunit. Contacts proteins S5 and S12.

Functionally, one of the primary rRNA binding proteins, it binds directly to 16S rRNA central domain where it helps coordinate assembly of the platform of the 30S subunit. The sequence is that of Small ribosomal subunit protein uS8 from Xanthomonas euvesicatoria pv. vesicatoria (strain 85-10) (Xanthomonas campestris pv. vesicatoria).